A 1177-amino-acid polypeptide reads, in one-letter code: Solute carrier family 9 member C1 (1177 aa).

The Extracellular segment spans residues 1 to 17 (MAGIFKEFFFSTEDLPE). A helical membrane pass occupies residues 18–37 (VILTLSLISSIGAFLNRHLE). The Cytoplasmic portion of the chain corresponds to 38-42 (DFPIP). Residues 43 to 60 (VPVILFLLGCSFEVLSFT) form a helical membrane-spanning segment. At 61–76 (SSQVQRYANAIQWMSP) the chain is on the extracellular side. A helical transmembrane segment spans residues 77–93 (DLFFRIFTPVVFFTTAF). Over 94–103 (DMDTYMLQKL) the chain is Cytoplasmic. A helical membrane pass occupies residues 104 to 129 (FWQILLISIPGFLVNYILVLWHLASV). Residues 104-191 (FWQILLISIP…SLITFTSIMD (88 aa)) are transport core domain. At 130 to 135 (NQLLLK) the chain is on the extracellular side. The chain crosses the membrane as a helical span at residues 136–161 (PTQWLLFSAILVSSDPMLTAAAIRDL). Over 162-164 (GLS) the chain is Cytoplasmic. The chain crosses the membrane as a helical span at residues 165 to 190 (RSLISLINGESLMTSVISLITFTSIM). Topologically, residues 191–204 (DFDQRLQSKRNHTL) are extracellular. The helical transmembrane segment at 205-236 (AEEIVGGICSYIIASFLFGILSSKLIQFWMST) threads the bilayer. At 237–240 (VFGD) the chain is on the cytoplasmic side. A helical transmembrane segment spans residues 241–262 (DVNHISLIFSILYLIFYICELV). At 263–265 (GMS) the chain is on the extracellular side. The helical transmembrane segment at 266–279 (GIFTLAIVGLLLNS) threads the bilayer. The Cytoplasmic portion of the chain corresponds to 280 to 286 (TSFKAAI). Residues 287-319 (EETLLLEFWTFLSRIAFLMVFTFFGLLIPAHTY) form a helical membrane-spanning segment. The Extracellular portion of the chain corresponds to 320–324 (LYIEF). Residues 325 to 354 (VDIYYSLNIYLTLIVLRFLTLLLISPVLSR) form a helical membrane-spanning segment. Residues 325-426 (VDIYYSLNIY…FILPVAVTIL (102 aa)) form a transport core domain region. Topologically, residues 355–360 (VGHEFS) are cytoplasmic. Residues 361-391 (WRWIFIMVCSEMKGMPNINMALLLAYSDLYF) traverse the membrane as a helical segment. Residues 392 to 395 (GSDK) are Extracellular-facing. The helical transmembrane segment at 396–426 (EKSQILFHGVLVCLITLVVNRFILPVAVTIL) threads the bilayer. Residues 427–612 (GLRDATSTKY…ICHTIVFTEE (186 aa)) are Cytoplasmic-facing. Positions 598-678 (YFFFRICHTI…DFFSHAWNIF (81 aa)) are ion transport-like. The helical transmembrane segment at 613 to 633 (FEHVGYLVILMNIFPFIISWI) threads the bilayer. The Extracellular segment spans residues 634-637 (SQLN). A helical membrane pass occupies residues 638–664 (VIYHSELKHTNYCFLTLYILEALLKIA). At 665–671 (AMRKDFF) the chain is on the cytoplasmic side. The helical transmembrane segment at 672-696 (SHAWNIFELAITLIGILHVILIEID) threads the bilayer. Residues 697-704 (TIKYIFNE) are Extracellular-facing. A helical membrane pass occupies residues 705 to 731 (TEVIVFIKVVQFFRILRIFKLIAPKLL). Topologically, residues 732 to 1177 (QIIDKRMSHQ…RINLRKVRKE (446 aa)) are cytoplasmic.

It belongs to the monovalent cation:proton antiporter 1 (CPA1) transporter (TC 2.A.36) family. In terms of assembly, interacts with soluble adenylyl cyclase (sAC). Sperm.

Its subcellular location is the cell projection. The protein resides in the cilium. It localises to the flagellum membrane. Sperm-specific solute carrier involved in intracellular pH regulation of spermatozoa. Required for sperm motility and fertility. Involved in sperm cell hyperactivation, a step needed for sperm motility which is essential late in the preparation of sperm for fertilization. Required for the expression and bicarbonate regulation of the soluble adenylyl cyclase (sAC). The sequence is that of Solute carrier family 9 member C1 (SLC9C1) from Homo sapiens (Human).